Consider the following 100-residue polypeptide: Large ribosomal subunit protein uL23 (100 aa).

This sequence belongs to the universal ribosomal protein uL23 family. Part of the 50S ribosomal subunit. Contacts protein L29, and trigger factor when it is bound to the ribosome.

In terms of biological role, one of the early assembly proteins it binds 23S rRNA. One of the proteins that surrounds the polypeptide exit tunnel on the outside of the ribosome. Forms the main docking site for trigger factor binding to the ribosome. This is Large ribosomal subunit protein uL23 from Kosmotoga olearia (strain ATCC BAA-1733 / DSM 21960 / TBF 19.5.1).